Here is a 544-residue protein sequence, read N- to C-terminus: Chaperonin GroEL 2 (544 aa).

Residues 29–32, Lys50, 86–90, Gly414, and Asp494 contribute to the ATP site; these read TLGP and DGTTT.

The protein belongs to the chaperonin (HSP60) family. As to quaternary structure, forms a cylinder of 14 subunits composed of two heptameric rings stacked back-to-back. Interacts with the co-chaperonin GroES.

It is found in the cytoplasm. The catalysed reaction is ATP + H2O + a folded polypeptide = ADP + phosphate + an unfolded polypeptide.. Its function is as follows. Together with its co-chaperonin GroES, plays an essential role in assisting protein folding. The GroEL-GroES system forms a nano-cage that allows encapsulation of the non-native substrate proteins and provides a physical environment optimized to promote and accelerate protein folding. The protein is Chaperonin GroEL 2 of Psychromonas ingrahamii (strain DSM 17664 / CCUG 51855 / 37).